A 1194-amino-acid chain; its full sequence is Multidrug efflux ATP-binding/permease protein Rv0194 (1194 aa).

The next 6 helical transmembrane spans lie at 20 to 40 (LLLGFGAALAGTVIAVLVPLV), 56 to 76 (LAPWAVVLVAAAGATYLLMYV), 130 to 150 (LLFDVPNVLRHVLTLLLGVAV), 153 to 173 (WLSVPLALLAVLLVPVIGLIA), 258 to 278 (FALGGWMAAQGSITVGTFVAF), and 279 to 299 (WACLTLLARPACDLAGMLTIA). Residues 21-301 (LLGFGAALAG…LAGMLTIAQQ (281 aa)) form the ABC transmembrane type-1 1 domain. The region spanning 334–568 (LEFQRVSFGY…CPRYRELLSP (235 aa)) is the ABC transporter 1 domain. 367–374 (GAPGSGKS) is an ATP binding site. 6 helical membrane passes run 628–648 (ALSLLLVAVQTCAGLLPPLLI), 660–680 (VLSALWWAALAGTATVVIRWV), 743–763 (LVVAVISVVTLVGILVALLAI), 765–785 (ARLVLLIFTTMPVLALATWQF), 847–867 (LLALYYPFVALLCSLATTLVL), and 878–898 (VISVGALVTYLLYIELLYTPI). The region spanning 628-910 (ALSLLLVAVQ…LAQMFDDYQR (283 aa)) is the ABC transmembrane type-1 2 domain. The ABC transporter 2 domain maps to 942-1177 (VVFDAVHYSY…GGHYSRLWAA (236 aa)). 976–983 (GSTGSGKS) lines the ATP pocket.

This sequence belongs to the ABC transporter superfamily. Lipid exporter (TC 3.A.1.106) family.

It localises to the cell inner membrane. With respect to regulation, efflux is inhibited by reserpine. Its function is as follows. Overexpression in M.smegmatis increases resistance to erythromycin, ampicillin, novobiocin and vancomycin. It also reduces accumulation of ethidium bromide in the cell. The polypeptide is Multidrug efflux ATP-binding/permease protein Rv0194 (Mycobacterium tuberculosis (strain ATCC 25618 / H37Rv)).